The sequence spans 250 residues: F-box only protein 17 (250 aa).

Positions 15 to 62 (HMALAELPPELLLQVLSHVPPRALVTRCRPVCRAWRDLVDGPSVWLLQ) constitute an F-box domain. The FBA domain maps to 99–250 (FCLLAPLGRN…GLLQGLSRLH (152 aa)).

Part of a SCF (SKP1-cullin-F-box) protein ligase complex. Interacts with SKP1 and CUL1.

Its function is as follows. Substrate-recognition component of the SCF (SKP1-CUL1-F-box protein)-type E3 ubiquitin ligase complex. Able to recognize and bind denatured glycoproteins, which are modified with complex-type oligosaccharides. Also recognizes sulfated glycans. Does not bind high-mannose glycoproteins. This is F-box only protein 17 (Fbxo17) from Rattus norvegicus (Rat).